Reading from the N-terminus, the 584-residue chain is ATP-dependent ubiquitin transferase-like protein Cap2 (584 aa).

Positions Met1–Glu137 are E2-like domain. The active-site For E2-like domain is Cys90. Positions Gly138–Asp338 are linker domain. An adenylation plus E1-like domain region spans residues Val339–Glu584. The active-site For E1-like domain is Cys522.

The protein in the C-terminal section; belongs to the HesA/MoeB/ThiF family. In terms of assembly, interacts with CD-NTase DncV in the presence and absence of phage T2. A Cap2 dimer is bound on either side by a DncV monomer.

In terms of biological role, CD-NTase priming component of a CBASS antiviral system. CBASS (cyclic oligonucleotide-based antiphage signaling system) provides immunity against bacteriophages. The CD-NTase protein (DncV) synthesizes cyclic nucleotides in response to infection; these serve as specific second messenger signals. The signals activate a diverse range of effectors, leading to bacterial cell death and thus abortive phage infection. A type II-A(GA) CBASS system. Primes DncV; acts as a protein transferase, conjugating DncV, the CD-NTase, to unidentified target(s) in the cell via an E1-E2 ubiquitin transferase-like mechanism. During the conjugation reaction DncV is probably transiently attached to AMP. Protein conjugation requires ATP. Functionally, protects E.coli against phage infection. When the CBASS operon (capV-dncV-cap2-cap3) is introduced in E.coli MG1655 there is about 100-fold protection against phages P1 and T2. When the operon is introduced in E.coli MG1655 there is a more than 10(3) decrease in the efficiency of T2 plaque formation. Protects 100-fold against phage T5, offers no protection against T7. When the operon is introduced in E.coli MG1655 it protects against phages T2, T4, T5 and T6. Another paper shows the operon confers protection against phages P1, T2, T5 and T6 but not T4 or lambda. This is ATP-dependent ubiquitin transferase-like protein Cap2 from Vibrio cholerae serotype O1 (strain ATCC 39315 / El Tor Inaba N16961).